The sequence spans 121 residues: MGRVFMVDLEGNIYICKLCKTHLSTDQDIMSKSFQCKNGRAYLFNNVVNVSVGEKEDRMMITGLHNVVDIFCVGCGSNVGWKYEFAHEKSQKYKEGKSVLELYKISGPHDSNDLVSDGDDA.

Positions 12 to 109 (NIYICKLCKT…LELYKISGPH (98 aa)) constitute a Yippee domain. Zn(2+) contacts are provided by cysteine 16, cysteine 19, cysteine 72, and cysteine 75.

The protein belongs to the yippee family.

This is Protein yippee-like At3g55890 from Arabidopsis thaliana (Mouse-ear cress).